Reading from the N-terminus, the 299-residue chain is Glycine--tRNA ligase alpha subunit (299 aa).

This sequence belongs to the class-II aminoacyl-tRNA synthetase family. Tetramer of two alpha and two beta subunits.

The protein resides in the cytoplasm. It catalyses the reaction tRNA(Gly) + glycine + ATP = glycyl-tRNA(Gly) + AMP + diphosphate. This Desulforapulum autotrophicum (strain ATCC 43914 / DSM 3382 / VKM B-1955 / HRM2) (Desulfobacterium autotrophicum) protein is Glycine--tRNA ligase alpha subunit.